A 26-amino-acid chain; its full sequence is RALATQLPVIPRSQVTFLAPVTRPEK.

It belongs to the FAH family. The cofactor is Ca(2+). It depends on Mg(2+) as a cofactor.

Functionally, may have hydrolase activity. In Mesocricetus auratus (Golden hamster), this protein is Fumarylacetoacetate hydrolase domain-containing protein 2A.